Consider the following 761-residue polypeptide: Hyperosmolality-gated Ca2+ permeable channel 1.6 (761 aa).

10 helical membrane-spanning segments follow: residues 7-27, 101-121, 156-176, 375-395, 419-439, 467-487, 512-532, 583-603, 630-650, and 653-673; these read IGVA…AFAI, IYLL…TTMV, PRFW…CFIL, LIVG…IAFV, LLKS…FLLF, FYMF…TAFQ, ATFF…GEIL, AAVS…AFVV, VVTA…TKHA, and STPL…HCKN. Basic and acidic residues predominate over residues 718-731; that stretch reads RVGEDPEPEEKLES. A disordered region spans residues 718 to 761; it reads RVGEDPEPEEKLESDMSPPDLVATKRWSWRNTPLPSKDSCREIP.

Belongs to the CSC1 (TC 1.A.17) family.

The protein localises to the membrane. Acts as an osmosensitive calcium-permeable cation channel. The chain is Hyperosmolality-gated Ca2+ permeable channel 1.6 from Arabidopsis thaliana (Mouse-ear cress).